The chain runs to 480 residues: uncharacterized protein (480 aa).

Positions 131 to 207 (KKIIKIKNDV…KVVKVRFFIK (77 aa)) constitute a PUA domain.

It in the C-terminal section; belongs to the PAPS reductase family.

This is an uncharacterized protein from Methanocaldococcus jannaschii (strain ATCC 43067 / DSM 2661 / JAL-1 / JCM 10045 / NBRC 100440) (Methanococcus jannaschii).